The sequence spans 360 residues: 3-dehydroquinate synthase (360 aa).

NAD(+) is bound by residues 70-75 (DGESLK), 128-129 (TT), lysine 141, and lysine 150. The Zn(2+) site is built by glutamate 182, histidine 243, and histidine 259.

Belongs to the sugar phosphate cyclases superfamily. Dehydroquinate synthase family. NAD(+) serves as cofactor. Co(2+) is required as a cofactor. Requires Zn(2+) as cofactor.

The protein resides in the cytoplasm. The catalysed reaction is 7-phospho-2-dehydro-3-deoxy-D-arabino-heptonate = 3-dehydroquinate + phosphate. Its pathway is metabolic intermediate biosynthesis; chorismate biosynthesis; chorismate from D-erythrose 4-phosphate and phosphoenolpyruvate: step 2/7. Its function is as follows. Catalyzes the conversion of 3-deoxy-D-arabino-heptulosonate 7-phosphate (DAHP) to dehydroquinate (DHQ). The chain is 3-dehydroquinate synthase from Thermoplasma volcanium (strain ATCC 51530 / DSM 4299 / JCM 9571 / NBRC 15438 / GSS1).